A 536-amino-acid chain; its full sequence is Glucan 1,6-alpha-glucosidase (536 aa).

Residue Asp194 is the Nucleophile of the active site. The Proton donor role is filled by Glu236.

The protein belongs to the glycosyl hydrolase 13 family.

The protein localises to the cytoplasm. The catalysed reaction is Hydrolysis of (1-&gt;6)-alpha-D-glucosidic linkages in (1-&gt;6)-alpha-D-glucans and derived oligosaccharides.. Its function is as follows. The physiological substrates may be short isomaltosaccharides. The protein is Glucan 1,6-alpha-glucosidase (dexB) of Streptococcus mutans serotype c (strain ATCC 700610 / UA159).